A 172-amino-acid polypeptide reads, in one-letter code: FMN reductase (NADH) RutF 2 (172 aa).

The protein belongs to the non-flavoprotein flavin reductase family. RutF subfamily.

The enzyme catalyses FMNH2 + NAD(+) = FMN + NADH + 2 H(+). Functionally, catalyzes the reduction of FMN to FMNH2 which is used to reduce pyrimidine by RutA via the Rut pathway. In Methylorubrum extorquens (strain PA1) (Methylobacterium extorquens), this protein is FMN reductase (NADH) RutF 2.